Consider the following 408-residue polypeptide: Argininosuccinate synthase (408 aa).

ATP contacts are provided by residues 11–19 (AYSGGLDTS) and A38. The L-citrulline site is built by Y91 and S96. G121 is a binding site for ATP. L-aspartate-binding residues include T123, N127, and D128. Residue N127 coordinates L-citrulline. L-citrulline contacts are provided by R131, S182, S191, E267, and Y279.

This sequence belongs to the argininosuccinate synthase family. Type 1 subfamily. Homotetramer.

The protein localises to the cytoplasm. It catalyses the reaction L-citrulline + L-aspartate + ATP = 2-(N(omega)-L-arginino)succinate + AMP + diphosphate + H(+). It participates in amino-acid biosynthesis; L-arginine biosynthesis; L-arginine from L-ornithine and carbamoyl phosphate: step 2/3. The sequence is that of Argininosuccinate synthase from Paracoccus denitrificans (strain Pd 1222).